The sequence spans 304 residues: Aspartate carbamoyltransferase catalytic subunit (304 aa).

Residues Arg-55 and Thr-56 each contribute to the carbamoyl phosphate site. Lys-83 is an L-aspartate binding site. Carbamoyl phosphate-binding residues include Arg-105, His-133, and Gln-136. Arg-166 and Arg-220 together coordinate L-aspartate. Gly-261 and Pro-262 together coordinate carbamoyl phosphate.

The protein belongs to the aspartate/ornithine carbamoyltransferase superfamily. ATCase family. As to quaternary structure, heterododecamer (2C3:3R2) of six catalytic PyrB chains organized as two trimers (C3), and six regulatory PyrI chains organized as three dimers (R2).

It carries out the reaction carbamoyl phosphate + L-aspartate = N-carbamoyl-L-aspartate + phosphate + H(+). Its pathway is pyrimidine metabolism; UMP biosynthesis via de novo pathway; (S)-dihydroorotate from bicarbonate: step 2/3. Catalyzes the condensation of carbamoyl phosphate and aspartate to form carbamoyl aspartate and inorganic phosphate, the committed step in the de novo pyrimidine nucleotide biosynthesis pathway. This is Aspartate carbamoyltransferase catalytic subunit from Caldanaerobacter subterraneus subsp. tengcongensis (strain DSM 15242 / JCM 11007 / NBRC 100824 / MB4) (Thermoanaerobacter tengcongensis).